We begin with the raw amino-acid sequence, 944 residues long: Neutral alpha-glucosidase AB (944 aa).

The first 32 residues, 1–32 (MAAVAAVAARRRRSWTGLVLACLGVCLGLTLA), serve as a signal peptide directing secretion. Cys41 and Cys47 form a disulfide bridge. The residue at position 52 (Ser52) is a Phosphoserine. Residue Asn97 is glycosylated (N-linked (GlcNAc...) asparagine). Residues 181–225 (QRAPRVSQGSKDPAEGDGAQPEEAPGDGDKPEEIQGKAEKDEPGA) form a disordered region. A compositionally biased stretch (basic and acidic residues) spans 207–225 (DGDKPEEIQGKAEKDEPGA). Substrate contacts are provided by Asp283 and Asp429. Asp542 (nucleophile) is an active-site residue. Arg602 contributes to the substrate binding site. Asp618 functions as the Proton donor in the catalytic mechanism. Cys633 and Cys644 are joined by a disulfide. Position 676 (His676) interacts with substrate.

It belongs to the glycosyl hydrolase 31 family. As to quaternary structure, heterodimer of a catalytic alpha subunit (GANAB) and a beta subunit (PRKCSH). Binds glycosylated PTPRC. In terms of processing, contains sialylated polysaccharide chains.

Its subcellular location is the endoplasmic reticulum. The protein resides in the golgi apparatus. It localises to the melanosome. It carries out the reaction N(4)-(alpha-D-Glc-(1-&gt;3)-alpha-D-Man-(1-&gt;2)-alpha-D-Man-(1-&gt;2)-alpha-D-Man-(1-&gt;3)-[alpha-D-Man-(1-&gt;2)-alpha-D-Man-(1-&gt;3)-[alpha-D-Man-(1-&gt;2)-alpha-D-Man-(1-&gt;6)]-alpha-D-Man-(1-&gt;6)]-beta-D-Man-(1-&gt;4)-beta-D-GlcNAc-(1-&gt;4)-beta-D-GlcNAc)-L-asparaginyl-[protein] + H2O = N(4)-(alpha-D-Man-(1-&gt;2)-alpha-D-Man-(1-&gt;2)-alpha-D-Man-(1-&gt;3)-[alpha-D-Man-(1-&gt;2)-alpha-D-Man-(1-&gt;3)-[alpha-D-Man-(1-&gt;2)-alpha-D-Man-(1-&gt;6)]-alpha-D-Man-(1-&gt;6)]-beta-D-Man-(1-&gt;4)-beta-D-GlcNAc-(1-&gt;4)-beta-D-GlcNAc)-L-asparaginyl-[protein] (N-glucan mannose isomer 9A1,2,3B1,2,3) + beta-D-glucose. It catalyses the reaction N(4)-(alpha-D-Glc-(1-&gt;3)-alpha-D-Glc-(1-&gt;3)-alpha-D-Man-(1-&gt;2)-alpha-D-Man-(1-&gt;2)-alpha-D-Man-(1-&gt;3)-[alpha-D-Man-(1-&gt;2)-alpha-D-Man-(1-&gt;3)-[alpha-D-Man-(1-&gt;2)-alpha-D-Man-(1-&gt;6)]-alpha-D-Man-(1-&gt;6)]-beta-D-Man-(1-&gt;4)-beta-D-GlcNAc-(1-&gt;4)-beta-D-GlcNAc)-L-asparaginyl-[protein] + H2O = N(4)-(alpha-D-Glc-(1-&gt;3)-alpha-D-Man-(1-&gt;2)-alpha-D-Man-(1-&gt;2)-alpha-D-Man-(1-&gt;3)-[alpha-D-Man-(1-&gt;2)-alpha-D-Man-(1-&gt;3)-[alpha-D-Man-(1-&gt;2)-alpha-D-Man-(1-&gt;6)]-alpha-D-Man-(1-&gt;6)]-beta-D-Man-(1-&gt;4)-beta-D-GlcNAc-(1-&gt;4)-beta-D-GlcNAc)-L-asparaginyl-[protein] + beta-D-glucose. Its pathway is glycan metabolism; N-glycan metabolism. Its function is as follows. Catalytic subunit of glucosidase II that cleaves sequentially the 2 innermost alpha-1,3-linked glucose residues from the Glc(2)Man(9)GlcNAc(2) oligosaccharide precursor of immature glycoproteins. Required for PKD1/Polycystin-1 and PKD2/Polycystin-2 maturation and localization to the cell surface and cilia. The chain is Neutral alpha-glucosidase AB (GANAB) from Sus scrofa (Pig).